We begin with the raw amino-acid sequence, 233 residues long: Phosphatidylserine decarboxylase proenzyme (233 aa).

The Schiff-base intermediate with substrate; via pyruvic acid role is filled by S190. S190 bears the Pyruvic acid (Ser); by autocatalysis mark.

This sequence belongs to the phosphatidylserine decarboxylase family. PSD-A subfamily. As to quaternary structure, heterodimer of a large membrane-associated beta subunit and a small pyruvoyl-containing alpha subunit. The cofactor is pyruvate. In terms of processing, is synthesized initially as an inactive proenzyme. Formation of the active enzyme involves a self-maturation process in which the active site pyruvoyl group is generated from an internal serine residue via an autocatalytic post-translational modification. Two non-identical subunits are generated from the proenzyme in this reaction, and the pyruvate is formed at the N-terminus of the alpha chain, which is derived from the carboxyl end of the proenzyme. The post-translation cleavage follows an unusual pathway, termed non-hydrolytic serinolysis, in which the side chain hydroxyl group of the serine supplies its oxygen atom to form the C-terminus of the beta chain, while the remainder of the serine residue undergoes an oxidative deamination to produce ammonia and the pyruvoyl prosthetic group on the alpha chain.

The protein resides in the cell membrane. It carries out the reaction a 1,2-diacyl-sn-glycero-3-phospho-L-serine + H(+) = a 1,2-diacyl-sn-glycero-3-phosphoethanolamine + CO2. Its pathway is phospholipid metabolism; phosphatidylethanolamine biosynthesis; phosphatidylethanolamine from CDP-diacylglycerol: step 2/2. Catalyzes the formation of phosphatidylethanolamine (PtdEtn) from phosphatidylserine (PtdSer). This chain is Phosphatidylserine decarboxylase proenzyme, found in Bartonella quintana (strain Toulouse) (Rochalimaea quintana).